A 188-amino-acid chain; its full sequence is UPF0398 protein SE_1135 (188 aa).

The protein belongs to the UPF0398 family.

The chain is UPF0398 protein SE_1135 from Staphylococcus epidermidis (strain ATCC 12228 / FDA PCI 1200).